The sequence spans 131 residues: Small ribosomal subunit protein uS8 (131 aa).

Belongs to the universal ribosomal protein uS8 family. In terms of assembly, part of the 30S ribosomal subunit. Contacts proteins S5 and S12.

Functionally, one of the primary rRNA binding proteins, it binds directly to 16S rRNA central domain where it helps coordinate assembly of the platform of the 30S subunit. This chain is Small ribosomal subunit protein uS8, found in Dehalococcoides mccartyi (strain CBDB1).